The following is an 805-amino-acid chain: Ubiquitin carboxyl-terminal hydrolase 10-B (805 aa).

Disordered stretches follow at residues 136 to 173 (AIPD…YLEG) and 284 to 305 (DTTE…EDTV). Polar residues-rich tracts occupy residues 143 to 153 (NADSDGTSGTG) and 284 to 298 (DTTE…QTLE). Positions 422–802 (RGLINKGNWC…TAYLLYYRRV (381 aa)) constitute a USP domain. C431 (nucleophile) is an active-site residue. The interval 573-600 (EEVNKEEQEGSDEEWEQVGPRNKSSVTR) is disordered. H756 (proton acceptor) is an active-site residue.

The protein belongs to the peptidase C19 family. USP10 subfamily.

The protein resides in the cytoplasm. Its subcellular location is the nucleus. The catalysed reaction is Thiol-dependent hydrolysis of ester, thioester, amide, peptide and isopeptide bonds formed by the C-terminal Gly of ubiquitin (a 76-residue protein attached to proteins as an intracellular targeting signal).. In terms of biological role, hydrolase that can remove conjugated ubiquitin from target proteins such as p53/tp53, rps2/us5, rps3/us3, rps10/eS10, becn1, snx3 and cftr. Acts as an essential regulator of p53/tp53 stability: in unstressed cells, specifically deubiquitinates p53/tp53 in the cytoplasm, leading to counteracts MDM2 action and stabilize p53/tp53. Following DNA damage, translocates to the nucleus and deubiquitinates p53/tp53, leading to regulate the p53/TP53-dependent DNA damage response. Component of a regulatory loop that controls autophagy and p53/tp53 levels. Plays a key role in 40S ribosome subunit recycling when a ribosome has stalled during translation: acts both by inhibiting formation of stress granules, which store stalled translation pre-initiation complexes, and mediating deubiquitination of 40S ribosome subunits. Deubiquitinates cftr in early endosomes, enhancing its endocytic recycling. This is Ubiquitin carboxyl-terminal hydrolase 10-B (usp10-b) from Xenopus laevis (African clawed frog).